A 594-amino-acid polypeptide reads, in one-letter code: DNA ligase (594 aa).

Glu280 lines the ATP pocket. Catalysis depends on Lys282, which acts as the N6-AMP-lysine intermediate. Residues Arg287, Arg316, Glu345, Phe385, Arg456, and Lys462 each coordinate ATP.

This sequence belongs to the ATP-dependent DNA ligase family. The cofactor is Mg(2+).

The catalysed reaction is ATP + (deoxyribonucleotide)n-3'-hydroxyl + 5'-phospho-(deoxyribonucleotide)m = (deoxyribonucleotide)n+m + AMP + diphosphate.. Functionally, DNA ligase that seals nicks in double-stranded DNA during DNA replication, DNA recombination and DNA repair. This chain is DNA ligase, found in Halorubrum lacusprofundi (strain ATCC 49239 / DSM 5036 / JCM 8891 / ACAM 34).